A 159-amino-acid polypeptide reads, in one-letter code: Putative ribosomal RNA large subunit methyltransferase H (159 aa).

S-adenosyl-L-methionine-binding positions include leucine 76, glycine 108, and 127–132 (FSKMTF).

Belongs to the RNA methyltransferase RlmH family.

The protein resides in the cytoplasm. It catalyses the reaction pseudouridine(1915) in 23S rRNA + S-adenosyl-L-methionine = N(3)-methylpseudouridine(1915) in 23S rRNA + S-adenosyl-L-homocysteine + H(+). In terms of biological role, specifically methylates the pseudouridine at position 1915 (m3Psi1915) in 23S rRNA. The polypeptide is Putative ribosomal RNA large subunit methyltransferase H (Methanococcus maripaludis (strain C5 / ATCC BAA-1333)).